The primary structure comprises 326 residues: Cyclin-dependent kinase 1 (326 aa).

Positions 16 to 306 constitute a Protein kinase domain; it reads FTKLEKIGEG…SKKALHHPYF (291 aa). ATP is bound by residues 22–30 and Lys45; that span reads IGEGTYGVV. Asp140 acts as the Proton acceptor in catalysis.

It belongs to the protein kinase superfamily. CMGC Ser/Thr protein kinase family. CDC2/CDKX subfamily. Forms a stable but non-covalent complex with a regulatory subunit and with a cyclin. Interacts with cks-1.

The protein localises to the nucleus. Its subcellular location is the cytoplasm. The protein resides in the cytoskeleton. It localises to the microtubule organizing center. It is found in the centrosome. It catalyses the reaction L-seryl-[protein] + ATP = O-phospho-L-seryl-[protein] + ADP + H(+). The enzyme catalyses L-threonyl-[protein] + ATP = O-phospho-L-threonyl-[protein] + ADP + H(+). The catalysed reaction is [DNA-directed RNA polymerase] + ATP = phospho-[DNA-directed RNA polymerase] + ADP + H(+). With respect to regulation, phosphorylation both activates and inactivates the enzyme depending on the site of phosphorylation. Functionally, plays a key role in the control of the eukaryotic cell cycle. Required for entry into S-phase and mitosis. Acts as a component of the kinase complex that phosphorylates the repetitive C-terminus of RNA polymerase II. May function in concert with npp-16 to arrest prophase blastomeres in response to anoxia. This chain is Cyclin-dependent kinase 1, found in Caenorhabditis briggsae.